The chain runs to 395 residues: Scyllo-inosose 3-dehydrogenase (395 aa).

Cys-66 is a Zn(2+) binding site. Catalysis depends on charge relay system residues Ser-68 and His-71. Positions 95, 96, 131, 134, 137, 145, and 193 each coordinate Zn(2+). 3 residues coordinate NAD(+): Ile-223, Glu-243, and Arg-248.

This sequence belongs to the zinc-containing alcohol dehydrogenase family. In terms of assembly, homodimer. Zn(2+) serves as cofactor.

The enzyme catalyses scyllo-inosose + NAD(+) = 3-dehydro-scyllo-inosose + NADH + H(+). Its pathway is polyol metabolism; myo-inositol metabolism. Functionally, catalyzes the NAD(+)-dependent oxidation of scyllo-inosose (2-keto-myo-inositol) to 3-dehydro-scyllo-inosose (diketo-inositol), and thus probably functions in a myo-inositol degradation pathway together with IolG, IolN and IolO. Has no activity on myo-inositol, D-chiro-inositol and 1-keto-D-chiro-inositol. This is Scyllo-inosose 3-dehydrogenase from Thermotoga maritima (strain ATCC 43589 / DSM 3109 / JCM 10099 / NBRC 100826 / MSB8).